Here is a 209-residue protein sequence, read N- to C-terminus: Large ribosomal subunit protein uL4 (209 aa).

Residues 45-80 (RQGTHKAKERSELSGSTRKLIRQKGSGGARRGDINS) are disordered.

The protein belongs to the universal ribosomal protein uL4 family. As to quaternary structure, part of the 50S ribosomal subunit.

Functionally, one of the primary rRNA binding proteins, this protein initially binds near the 5'-end of the 23S rRNA. It is important during the early stages of 50S assembly. It makes multiple contacts with different domains of the 23S rRNA in the assembled 50S subunit and ribosome. Its function is as follows. Forms part of the polypeptide exit tunnel. The chain is Large ribosomal subunit protein uL4 from Porphyromonas gingivalis (strain ATCC BAA-308 / W83).